The primary structure comprises 299 residues: ATP phosphoribosyltransferase (299 aa).

The protein belongs to the ATP phosphoribosyltransferase family. Long subfamily. Mg(2+) serves as cofactor.

It is found in the cytoplasm. The catalysed reaction is 1-(5-phospho-beta-D-ribosyl)-ATP + diphosphate = 5-phospho-alpha-D-ribose 1-diphosphate + ATP. The protein operates within amino-acid biosynthesis; L-histidine biosynthesis; L-histidine from 5-phospho-alpha-D-ribose 1-diphosphate: step 1/9. Its activity is regulated as follows. Feedback inhibited by histidine. In terms of biological role, catalyzes the condensation of ATP and 5-phosphoribose 1-diphosphate to form N'-(5'-phosphoribosyl)-ATP (PR-ATP). Has a crucial role in the pathway because the rate of histidine biosynthesis seems to be controlled primarily by regulation of HisG enzymatic activity. The polypeptide is ATP phosphoribosyltransferase (Campylobacter jejuni subsp. doylei (strain ATCC BAA-1458 / RM4099 / 269.97)).